Here is a 367-residue protein sequence, read N- to C-terminus: NAD(P)H-quinone oxidoreductase subunit 1, chloroplastic (367 aa).

7 consecutive transmembrane segments (helical) span residues 30–50 (LFPI…IVWL), 98–118 (FSIG…VIPF), 127–147 (LSIG…GLLM), 164–184 (AAAQ…SISL), 273–293 (LFVT…IFVP), 304–324 (VFGT…FLFI), and 340–360 (LLNL…LLTT).

It belongs to the complex I subunit 1 family. As to quaternary structure, NDH is composed of at least 16 different subunits, 5 of which are encoded in the nucleus.

It is found in the plastid. The protein resides in the chloroplast thylakoid membrane. The catalysed reaction is a plastoquinone + NADH + (n+1) H(+)(in) = a plastoquinol + NAD(+) + n H(+)(out). The enzyme catalyses a plastoquinone + NADPH + (n+1) H(+)(in) = a plastoquinol + NADP(+) + n H(+)(out). Its function is as follows. NDH shuttles electrons from NAD(P)H:plastoquinone, via FMN and iron-sulfur (Fe-S) centers, to quinones in the photosynthetic chain and possibly in a chloroplast respiratory chain. The immediate electron acceptor for the enzyme in this species is believed to be plastoquinone. Couples the redox reaction to proton translocation, and thus conserves the redox energy in a proton gradient. In Nicotiana tabacum (Common tobacco), this protein is NAD(P)H-quinone oxidoreductase subunit 1, chloroplastic.